Reading from the N-terminus, the 442-residue chain is Betaine reductase complex component B subunit alpha (442 aa).

In terms of assembly, heterotetramer of two alpha and two beta subunits. Component of the betaine reductase complex, together with components A and C. PB is substrate specific.

It carries out the reaction acetyl phosphate + trimethylamine + [thioredoxin]-disulfide + H2O = glycine betaine + [thioredoxin]-dithiol + phosphate + H(+). In the first step of betaine reductase, the substrate is bound to component PB via a Schiff base intermediate. Then the PB-activated substrate is nucleophilically attacked by the selenol anion of component PA to transform it to a carboxymethylated selenoether and the respective amine. By action of component PC, acetyl phosphate is formed, leaving component PA in its oxidized state. Finally component PA becomes reduced by the thioredoxin system to start a new catalytic cycle of reductive deamination. In Peptoclostridium acidaminophilum (Eubacterium acidaminophilum), this protein is Betaine reductase complex component B subunit alpha (grdI).